A 317-amino-acid chain; its full sequence is Acetyl-coenzyme A carboxylase carboxyl transferase subunit alpha (317 aa).

The region spanning 37-292 (QISQKLEDTK…EEYILKAFNE (256 aa)) is the CoA carboxyltransferase C-terminal domain.

This sequence belongs to the AccA family. Acetyl-CoA carboxylase is a heterohexamer composed of biotin carboxyl carrier protein (AccB), biotin carboxylase (AccC) and two subunits each of ACCase subunit alpha (AccA) and ACCase subunit beta (AccD).

The protein resides in the cytoplasm. It catalyses the reaction N(6)-carboxybiotinyl-L-lysyl-[protein] + acetyl-CoA = N(6)-biotinyl-L-lysyl-[protein] + malonyl-CoA. It functions in the pathway lipid metabolism; malonyl-CoA biosynthesis; malonyl-CoA from acetyl-CoA: step 1/1. In terms of biological role, component of the acetyl coenzyme A carboxylase (ACC) complex. First, biotin carboxylase catalyzes the carboxylation of biotin on its carrier protein (BCCP) and then the CO(2) group is transferred by the carboxyltransferase to acetyl-CoA to form malonyl-CoA. The chain is Acetyl-coenzyme A carboxylase carboxyl transferase subunit alpha from Flavobacterium psychrophilum (strain ATCC 49511 / DSM 21280 / CIP 103535 / JIP02/86).